The sequence spans 393 residues: Pyrimidine monooxygenase RutA (393 aa).

Residues 79-80 (IK), Asn145, Glu154, 170-171 (RY), and Ser220 each bind FMN.

The protein belongs to the NtaA/SnaA/DszA monooxygenase family. RutA subfamily.

It catalyses the reaction uracil + FMNH2 + NADH + O2 = (Z)-3-ureidoacrylate + FMN + NAD(+) + H2O + H(+). It carries out the reaction thymine + FMNH2 + NADH + O2 = (Z)-2-methylureidoacrylate + FMN + NAD(+) + H2O + H(+). Catalyzes the pyrimidine ring opening between N-3 and C-4 by an unusual flavin hydroperoxide-catalyzed mechanism, adding oxygen atoms in the process to yield ureidoacrylate peracid, that immediately reacts with FMN forming ureidoacrylate and FMN-N(5)-oxide. The FMN-N(5)-oxide reacts spontaneously with NADH to produce FMN. Requires the flavin reductase RutF to regenerate FMN in vivo. The chain is Pyrimidine monooxygenase RutA from Escherichia coli O139:H28 (strain E24377A / ETEC).